A 468-amino-acid polypeptide reads, in one-letter code: Phosphomethylpyrimidine synthase (468 aa).

Residues asparagine 80, methionine 109, tyrosine 138, histidine 173, 193 to 195 (SRG), 234 to 237 (DGLR), and glutamate 273 contribute to the substrate site. Histidine 277 serves as a coordination point for Zn(2+). Tyrosine 300 is a substrate binding site. Histidine 341 contacts Zn(2+). Residues cysteine 421, cysteine 424, and cysteine 429 each coordinate [4Fe-4S] cluster.

This sequence belongs to the ThiC family. Homodimer. The cofactor is [4Fe-4S] cluster.

It carries out the reaction 5-amino-1-(5-phospho-beta-D-ribosyl)imidazole + S-adenosyl-L-methionine = 4-amino-2-methyl-5-(phosphooxymethyl)pyrimidine + CO + 5'-deoxyadenosine + formate + L-methionine + 3 H(+). The protein operates within cofactor biosynthesis; thiamine diphosphate biosynthesis. Functionally, catalyzes the synthesis of the hydroxymethylpyrimidine phosphate (HMP-P) moiety of thiamine from aminoimidazole ribotide (AIR) in a radical S-adenosyl-L-methionine (SAM)-dependent reaction. This is Phosphomethylpyrimidine synthase from Anaeromyxobacter sp. (strain Fw109-5).